Consider the following 728-residue polypeptide: Ubiquitin carboxyl-terminal hydrolase BAP1 (728 aa).

Residues 4–235 form the UCH catalytic domain; that stretch reads GWLELESDPG…IRFNLMAVVP (232 aa). An Arg-finger motif motif is present at residues 56 to 60; that stretch reads RRSRR. Cysteine 91 functions as the Nucleophile in the catalytic mechanism. Histidine 169 functions as the Proton donor in the catalytic mechanism. Residues 273-333 form a disordered region; sequence THKSQESQLP…TTHSPPSKCK (61 aa). Serine 292 carries the post-translational modification Phosphoserine. An HBM-like motif motif is present at residues 363-366; it reads NHNY. Residues serine 369 and serine 395 each carry the phosphoserine modification. Disordered stretches follow at residues 372-436 and 463-523; these read QEEE…DGQL and SIKT…SPVT. Residues 395–408 show a composition bias toward acidic residues; sequence SEDEDDYEDEDEDV. Polar residues-rich tracts occupy residues 427-436 and 479-523; these read SLSNSSDGQL and THSQ…SPVT. The residue at position 492 (threonine 492) is a Phosphothreonine. Residues serine 520, serine 536, and serine 584 each carry the phosphoserine modification. The segment at 574–623 is disordered; that stretch reads LTEGGKGSSPSTRSSQGSQGSSGLEEKEVVEVTESRDKPGLNRSSEPLSG. Residues 581-596 are compositionally biased toward low complexity; that stretch reads SSPSTRSSQGSQGSSG. The interval 595–720 is interaction with BRCA1; sequence SGLEEKEVVE…QRKPDRRKRS (126 aa). Residues 597 to 613 are compositionally biased toward basic and acidic residues; it reads LEEKEVVEVTESRDKPG. Residues 629 to 660 adopt a coiled-coil conformation; that stretch reads KELLALLKCVEAEIANYEACLKEEVEKRKKFK. Positions 641–685 are interaction with YY1; sequence EIANYEACLKEEVEKRKKFKIDDQRRTHNYDEFICTFISMLAQEG. One can recognise a ULD domain in the interval 669–697; that stretch reads NYDEFICTFISMLAQEGMLANLVEQNISV. Residues 698–700 form an interaction with nucleosomal DNA forming a DNA clamp with ASXL1 region; that stretch reads RRR. A Classical bipartite Nuclear localization signal (NLS) motif is present at residues 698–721; sequence RRRQGVSIGRLHKQRKPDRRKRSR. The interval 702-728 is disordered; the sequence is GVSIGRLHKQRKPDRRKRSRPYKAKRQ. The positively charged C-terminal extension (CTE) stretch occupies residues 712 to 728; it reads RKPDRRKRSRPYKAKRQ. The short motif at 716 to 721 is the Nuclear localization signal element; sequence RRKRSR. The Non-classical PY-nuclear localization signal (PY-NLS) motif lies at 716-723; sequence RRKRSRPY.

Belongs to the peptidase C12 family. BAP1 subfamily. Core component of the polycomb repressive deubiquitinase (PR-DUB) complex, at least composed of BAP1, one of ASXL1, ASXL2 or (probably) ASXL3, and one of MBD5 or MBD6. The PR-DUB core associates with a number of accessory proteins, including FOXK1, FOXK2, KDM1B, HCFC1, YY1 and OGT; KDM1B specifically associates with ASXL2 PR-DUB complexes. The BAP1 deubiquitinase activity is not required for PR-DUB assembly. Homodimerizes (via coiled-coil hinge-region between the UCH and ULD domains) to mediate assembly of 2 copies of the BAP1-ASXL heterodimer into a bisymmetric tetramer; dimerization enhances association with nucleosomes. The PR-DUB complex associates with nucleosomes to mediate deubiquitination of 'lys-120' of histone H2AK118ub1 substrates; the association requires the positively charged C-terminal tail of BAP1. Interacts (via ULD domain) with ASXL1 (via DEUBAD domain); the interaction is direct and forms a ubiquitin binding cleft. The interaction with ASXL1 stabilizes BAP1 but is not required for nucleosome binding. Associates (via C-terminus) with nucleosome and chromatosome complexes through direct interaction with DNA and the histone3/4 dimer; this association displaces the histone-2A C-terminal tail, extending and orienting the H2AK118ub1 substrate towards the BAP1 deubiquitinase active site. Also interacts (via arginine finger) directly with the histone H2A-H2B acidic patch; this interaction is not critical for nucleosome-chromatosome association but may play a role in orienting the H2AK118ub1 substrate towards the PR-DUB complex active site. Interacts with BRCA1 (via the RING finger). Interacts (via HBM-like motif) with HCFC1. Interacts (via a C-terminal region overlapping the ULD domain) with YY1; the interaction is direct and requires the interaction with HCFC1. Interacts (when phosphorylated at Thr-492) with FOXK1. Interacts (when phosphorylated at Thr-492) with FOXK2; leading to recruitment of the PR-DUB complex and repression of FOXK2 target genes. Interacts (via non-classical PY-NLS) with TNPO1/transportin-1 (via HEAT repeats 8-12); the interaction is direct, mediates BAP1 nuclear localization and disrupts BAP1 homodimerization. Interacts (via C-terminus) with KPNA1/importin alpha5 and KPNA2/importin alpha1; these interactions can contribute to BAP1 nuclear localization but are less important than the interaction with TNPO1/transportin-1. The interaction with TNPO1/transportin-1 disrupts homodimerization and blocks ubiquitination by UBE2O. Ubiquitinated: monoubiquitinated at multiple sites within its nuclear localization signal (NLS) BY UBE2O, leading to cytoplasmic retention. Able to mediate autodeubiquitination via intramolecular interactions to counteract cytoplasmic retention. Monoubiquitinated on at least 4 sites near or within its PY-NLS. In terms of tissue distribution, highly expressed in mammary glands, testis and ovary. Up-regulated in mammary glands during puberty, pregnancy, and as a result of parity.

It is found in the cytoplasm. Its subcellular location is the nucleus. It localises to the chromosome. It carries out the reaction Thiol-dependent hydrolysis of ester, thioester, amide, peptide and isopeptide bonds formed by the C-terminal Gly of ubiquitin (a 76-residue protein attached to proteins as an intracellular targeting signal).. Its function is as follows. Deubiquitinating enzyme that plays a key role in chromatin by mediating deubiquitination of histone H2A and HCFC1. Catalytic component of the polycomb repressive deubiquitinase (PR-DUB) complex, a complex that specifically mediates deubiquitination of histone H2A monoubiquitinated at 'Lys-120' (H2AK119ub1). Does not deubiquitinate monoubiquitinated histone H2B. The PR-DUB complex is an epigenetic regulator of gene expression and acts as a transcriptional coactivator, affecting genes involved in development, cell communication, signaling, cell proliferation and cell viability. Antagonizes PRC1 mediated H2AK119ub1 monoubiquitination. As part of the PR-DUB complex, associates with chromatin enriched in histone marks H3K4me1, H3K4me3, and H3K27Ac, but not in H3K27me3. Acts as a regulator of cell growth by mediating deubiquitination of HCFC1 N-terminal and C-terminal chains, with some specificity toward 'Lys-48'-linked polyubiquitin chains compared to 'Lys-63'-linked polyubiquitin chains. Deubiquitination of HCFC1 does not lead to increase stability of HCFC1. Interferes with the BRCA1 and BARD1 heterodimer activity by inhibiting their ability to mediate ubiquitination and autoubiquitination. It however does not mediate deubiquitination of BRCA1 and BARD1. Able to mediate autodeubiquitination via intramolecular interactions to counteract monoubiquitination at the nuclear localization signal (NLS), thereby protecting it from cytoplasmic sequestration. Negatively regulates epithelial-mesenchymal transition (EMT) of trophoblast stem cells during placental development by regulating genes involved in epithelial cell integrity, cell adhesion and cytoskeletal organization. This chain is Ubiquitin carboxyl-terminal hydrolase BAP1 (Bap1), found in Mus musculus (Mouse).